The sequence spans 707 residues: Toxin RTX-I translocation ATP-binding protein (707 aa).

The 125-residue stretch at 1–125 (MDFYREEDYG…SLYQGKLILV (125 aa)) folds into the Peptidase C39 domain. H83 is an active-site residue. In terms of domain architecture, ABC transmembrane type-1 spans 154–436 (FIETLIVSIF…LAQLWQDFQQ (283 aa)). 5 consecutive transmembrane segments (helical) span residues 158–178 (LIVSIFLQIFALITPLFFQVV), 188–208 (FSTLNVITVALAIVVLFEIVL), 295–315 (LVILGSLPFYMGWSIFISPIL), 387–407 (VVMVITLWLGAHLVISGDLSI), and 410–430 (LIAFNMLSGQVIAPVIRLAQL). An ABC transporter domain is found at 468–703 (ITFRNIRFRY…PNGLYHYLHQ (236 aa)). An ATP-binding site is contributed by 502–509 (GRSGSGKS).

This sequence belongs to the ABC transporter superfamily. Protein-1 exporter (TC 3.A.1.109) family. Homodimer.

The protein resides in the cell membrane. In terms of biological role, involved in the transport of the toxin RTX-I as well as that of RTX-II. The protein is Toxin RTX-I translocation ATP-binding protein (apxIB) of Actinobacillus pleuropneumoniae (Haemophilus pleuropneumoniae).